A 352-amino-acid chain; its full sequence is Probable dual-specificity RNA methyltransferase RlmN (352 aa).

The active-site Proton acceptor is the Glu92. The Radical SAM core domain maps to Tyr98 to Asp328. The cysteines at positions 105 and 333 are disulfide-linked. [4Fe-4S] cluster contacts are provided by Cys112, Cys116, and Cys119. S-adenosyl-L-methionine contacts are provided by residues Gly159–Glu160, Ser191, Ser214–His216, and Asn290. Cys333 acts as the S-methylcysteine intermediate in catalysis.

The protein belongs to the radical SAM superfamily. RlmN family. The cofactor is [4Fe-4S] cluster.

Its subcellular location is the cytoplasm. It catalyses the reaction adenosine(2503) in 23S rRNA + 2 reduced [2Fe-2S]-[ferredoxin] + 2 S-adenosyl-L-methionine = 2-methyladenosine(2503) in 23S rRNA + 5'-deoxyadenosine + L-methionine + 2 oxidized [2Fe-2S]-[ferredoxin] + S-adenosyl-L-homocysteine. It carries out the reaction adenosine(37) in tRNA + 2 reduced [2Fe-2S]-[ferredoxin] + 2 S-adenosyl-L-methionine = 2-methyladenosine(37) in tRNA + 5'-deoxyadenosine + L-methionine + 2 oxidized [2Fe-2S]-[ferredoxin] + S-adenosyl-L-homocysteine. Functionally, specifically methylates position 2 of adenine 2503 in 23S rRNA and position 2 of adenine 37 in tRNAs. In Alkaliphilus metalliredigens (strain QYMF), this protein is Probable dual-specificity RNA methyltransferase RlmN.